The primary structure comprises 502 residues: Probable glycine dehydrogenase (decarboxylating) subunit 2 (502 aa).

Position 273 is an N6-(pyridoxal phosphate)lysine (Lys273).

This sequence belongs to the GcvP family. C-terminal subunit subfamily. The glycine cleavage system is composed of four proteins: P, T, L and H. In this organism, the P 'protein' is a heterodimer of two subunits. Pyridoxal 5'-phosphate serves as cofactor.

It catalyses the reaction N(6)-[(R)-lipoyl]-L-lysyl-[glycine-cleavage complex H protein] + glycine + H(+) = N(6)-[(R)-S(8)-aminomethyldihydrolipoyl]-L-lysyl-[glycine-cleavage complex H protein] + CO2. Its function is as follows. The glycine cleavage system catalyzes the degradation of glycine. The P protein binds the alpha-amino group of glycine through its pyridoxal phosphate cofactor; CO(2) is released and the remaining methylamine moiety is then transferred to the lipoamide cofactor of the H protein. This is Probable glycine dehydrogenase (decarboxylating) subunit 2 from Pyrococcus abyssi (strain GE5 / Orsay).